A 192-amino-acid polypeptide reads, in one-letter code: Probable nicotinate-nucleotide adenylyltransferase (192 aa).

This sequence belongs to the NadD family.

The catalysed reaction is nicotinate beta-D-ribonucleotide + ATP + H(+) = deamido-NAD(+) + diphosphate. Its pathway is cofactor biosynthesis; NAD(+) biosynthesis; deamido-NAD(+) from nicotinate D-ribonucleotide: step 1/1. Catalyzes the reversible adenylation of nicotinate mononucleotide (NaMN) to nicotinic acid adenine dinucleotide (NaAD). This chain is Probable nicotinate-nucleotide adenylyltransferase, found in Rhizobium etli (strain CIAT 652).